Consider the following 400-residue polypeptide: Diphosphomevalonate decarboxylase (400 aa).

An N-acetylalanine modification is found at Ala-2. Residues 23-26 (YWGK), Arg-78, 156-161 (SGSACR), and Thr-212 each bind (R)-5-diphosphomevalonate.

This sequence belongs to the diphosphomevalonate decarboxylase family. As to quaternary structure, homodimer.

The protein localises to the cytoplasm. The catalysed reaction is (R)-5-diphosphomevalonate + ATP = isopentenyl diphosphate + ADP + phosphate + CO2. The protein operates within steroid biosynthesis; cholesterol biosynthesis. Catalyzes the ATP dependent decarboxylation of (R)-5-diphosphomevalonate to form isopentenyl diphosphate (IPP). Functions in the mevalonate (MVA) pathway leading to isopentenyl diphosphate (IPP), a key precursor for the biosynthesis of isoprenoids and sterol synthesis. This is Diphosphomevalonate decarboxylase (MVD) from Bos taurus (Bovine).